Reading from the N-terminus, the 451-residue chain is Transcription factor TGAL8 (451 aa).

Residues M1–R22 are compositionally biased toward polar residues. Disordered regions lie at residues M1–S32 and F70–L151. The span at K141–T150 shows a compositional bias: basic and acidic residues. Residues D147–F191 enclose the bZIP domain. The segment at K149 to K169 is basic motif. The leucine-zipper stretch occupies residues L175–I189. The DOG1 domain occupies A208 to T444.

This sequence belongs to the bZIP family. As to quaternary structure, interacts with NPR5/NH4, NH5.1 and NH5.2.

The protein localises to the nucleus. Transcriptional regulator involved in defense response. The sequence is that of Transcription factor TGAL8 from Oryza sativa subsp. japonica (Rice).